A 329-amino-acid polypeptide reads, in one-letter code: DNA-directed RNA polymerase subunit alpha (329 aa).

The alpha N-terminal domain (alpha-NTD) stretch occupies residues 1-231 (MSILSFQMPE…KHFMLFSDQT (231 aa)). Positions 247–329 (EEFLHMRKLL…DTAKYKLDED (83 aa)) are alpha C-terminal domain (alpha-CTD).

This sequence belongs to the RNA polymerase alpha chain family. In terms of assembly, homodimer. The RNAP catalytic core consists of 2 alpha, 1 beta, 1 beta' and 1 omega subunit. When a sigma factor is associated with the core the holoenzyme is formed, which can initiate transcription.

It carries out the reaction RNA(n) + a ribonucleoside 5'-triphosphate = RNA(n+1) + diphosphate. DNA-dependent RNA polymerase catalyzes the transcription of DNA into RNA using the four ribonucleoside triphosphates as substrates. The chain is DNA-directed RNA polymerase subunit alpha from Cytophaga hutchinsonii (strain ATCC 33406 / DSM 1761 / CIP 103989 / NBRC 15051 / NCIMB 9469 / D465).